Reading from the N-terminus, the 432-residue chain is Acyl-coenzyme A thioesterase 3 (432 aa).

Residues Ser243, Asp337, and His371 each act as charge relay system in the active site. The Microbody targeting signal motif lies at 430–432 (AKL).

Belongs to the C/M/P thioester hydrolase family. Widely expressed. Highly expressed in the kidney, expressed at low level in the liver. Isoform 2 is expressed in the kidney, but not in the liver. Isoform 1 is liver-specific. Highly expressed in kidney (at protein level).

The protein resides in the peroxisome. It carries out the reaction hexadecanoyl-CoA + H2O = hexadecanoate + CoA + H(+). The catalysed reaction is decanoyl-CoA + H2O = decanoate + CoA + H(+). It catalyses the reaction dodecanoyl-CoA + H2O = dodecanoate + CoA + H(+). The enzyme catalyses tetradecanoyl-CoA + H2O = tetradecanoate + CoA + H(+). It carries out the reaction octadecanoyl-CoA + H2O = octadecanoate + CoA + H(+). The catalysed reaction is eicosanoyl-CoA + H2O = eicosanoate + CoA + H(+). It catalyses the reaction (9Z)-octadecenoyl-CoA + H2O = (9Z)-octadecenoate + CoA + H(+). The enzyme catalyses (9Z,12Z)-octadecadienoyl-CoA + H2O = (9Z,12Z)-octadecadienoate + CoA + H(+). It carries out the reaction (5Z,8Z,11Z,14Z)-eicosatetraenoyl-CoA + H2O = (5Z,8Z,11Z,14Z)-eicosatetraenoate + CoA + H(+). The catalysed reaction is tetracosanoyl-CoA + H2O = tetracosanoate + CoA + H(+). It catalyses the reaction hexacosanoyl-CoA + H2O = hexacosanoate + CoA + H(+). The enzyme catalyses docosanoyl-CoA + H2O = docosanoate + CoA + H(+). It carries out the reaction (9Z)-hexadecenoyl-CoA + H2O = (9Z)-hexadecenoate + CoA + H(+). Its pathway is lipid metabolism; fatty acid metabolism. Functionally, catalyzes the hydrolysis of acyl-CoAs into free fatty acids and coenzyme A (CoASH), regulating their respective intracellular levels. Mainly active on long-chain acyl-CoAs. May have a function in termination of beta-oxidation of fatty acids. This chain is Acyl-coenzyme A thioesterase 3 (Acot3), found in Mus musculus (Mouse).